Reading from the N-terminus, the 955-residue chain is Protein translocase subunit SecA (955 aa).

ATP-binding positions include Q87, 105–109 (GEGKT), and D494. The segment at 861–955 (AAPAPAAPRP…KKAPRTKRKR (95 aa)) is disordered. Low complexity predominate over residues 874 to 888 (QEAAQQAQGTAAPSA). Residues 943-955 (SKGKKAPRTKRKR) show a composition bias toward basic residues.

It belongs to the SecA family. In terms of assembly, monomer and homodimer. Part of the essential Sec protein translocation apparatus which comprises SecA, SecYEG and auxiliary proteins SecDF. Other proteins may also be involved.

It localises to the cell membrane. The protein localises to the cytoplasm. It carries out the reaction ATP + H2O + cellular proteinSide 1 = ADP + phosphate + cellular proteinSide 2.. Functionally, part of the Sec protein translocase complex. Interacts with the SecYEG preprotein conducting channel. Has a central role in coupling the hydrolysis of ATP to the transfer of proteins into and across the cell membrane, serving as an ATP-driven molecular motor driving the stepwise translocation of polypeptide chains across the membrane. The polypeptide is Protein translocase subunit SecA (Rhodococcus opacus (strain B4)).